A 274-amino-acid chain; its full sequence is Energy-coupling factor transporter ATP-binding protein EcfA1 (274 aa).

Residues 10–241 (ASFQGVYFSY…AAELQKIRLD (232 aa)) form the ABC transporter domain. 42-49 (GHNGSGKS) is a binding site for ATP.

This sequence belongs to the ABC transporter superfamily. Energy-coupling factor EcfA family. As to quaternary structure, forms a stable energy-coupling factor (ECF) transporter complex composed of 2 membrane-embedded substrate-binding proteins (S component), 2 ATP-binding proteins (A component) and 2 transmembrane proteins (T component).

The protein localises to the cell membrane. Its function is as follows. ATP-binding (A) component of a common energy-coupling factor (ECF) ABC-transporter complex. Unlike classic ABC transporters this ECF transporter provides the energy necessary to transport a number of different substrates. This Mycoplasma pneumoniae (strain ATCC 29342 / M129 / Subtype 1) (Mycoplasmoides pneumoniae) protein is Energy-coupling factor transporter ATP-binding protein EcfA1.